Here is a 137-residue protein sequence, read N- to C-terminus: Cellular retinoic acid-binding protein 1 (137 aa).

Residues 21–31 (KALGVNTMLRK) carry the Nuclear localization signal motif. Residue 132 to 134 (RIY) participates in all-trans-retinoate binding.

This sequence belongs to the calycin superfamily. Fatty-acid binding protein (FABP) family.

The protein localises to the cytoplasm. Cytosolic CRABPs may regulate the access of retinoic acid to the nuclear retinoic acid receptors. The chain is Cellular retinoic acid-binding protein 1 (crabp1) from Takifugu rubripes (Japanese pufferfish).